The chain runs to 68 residues: Conotoxin Lt5.2 (68 aa).

A signal peptide spans 1–19; sequence MLCLPVFIILLLLASPAAP. The propeptide occupies 20–54; it reads KSLETRIQNDLIRAGLTDADLKTEKGFLSGLLNVA.

Belongs to the conotoxin T superfamily. Contains 2 disulfide bonds that can be either 'C1-C3, C2-C4' or 'C1-C4, C2-C3', since these disulfide connectivities have been observed for conotoxins with cysteine framework V (for examples, see AC P0DQQ7 and AC P81755). In terms of tissue distribution, expressed by the venom duct.

The protein resides in the secreted. In Conus litteratus (Lettered cone), this protein is Conotoxin Lt5.2.